Reading from the N-terminus, the 270-residue chain is Glutamate racemase (270 aa).

Residues 14 to 15 (DS) and 46 to 47 (YG) contribute to the substrate site. Cys77 acts as the Proton donor/acceptor in catalysis. 78–79 (NT) is a binding site for substrate. Residue Cys189 is the Proton donor/acceptor of the active site. Residue 190–191 (TH) coordinates substrate.

This sequence belongs to the aspartate/glutamate racemases family.

The catalysed reaction is L-glutamate = D-glutamate. It participates in cell wall biogenesis; peptidoglycan biosynthesis. Its function is as follows. Provides the (R)-glutamate required for cell wall biosynthesis. This is Glutamate racemase from Neisseria gonorrhoeae (strain ATCC 700825 / FA 1090).